The sequence spans 429 residues: Histidinol dehydrogenase (429 aa).

Residues tyrosine 127, glutamine 188, and asparagine 211 each contribute to the NAD(+) site. The substrate site is built by serine 234, glutamine 256, and histidine 259. Positions 256 and 259 each coordinate Zn(2+). Active-site proton acceptor residues include glutamate 324 and histidine 325. Substrate contacts are provided by histidine 325, aspartate 358, glutamate 412, and histidine 417. Residue aspartate 358 participates in Zn(2+) binding. Histidine 417 is a binding site for Zn(2+).

Belongs to the histidinol dehydrogenase family. Requires Zn(2+) as cofactor.

It catalyses the reaction L-histidinol + 2 NAD(+) + H2O = L-histidine + 2 NADH + 3 H(+). It participates in amino-acid biosynthesis; L-histidine biosynthesis; L-histidine from 5-phospho-alpha-D-ribose 1-diphosphate: step 9/9. Functionally, catalyzes the sequential NAD-dependent oxidations of L-histidinol to L-histidinaldehyde and then to L-histidine. The sequence is that of Histidinol dehydrogenase from Bacillus thuringiensis subsp. konkukian (strain 97-27).